We begin with the raw amino-acid sequence, 443 residues long: Xaa-Pro dipeptidase (443 aa).

Mn(2+) contacts are provided by Asp-248, Asp-259, His-339, Glu-384, and Glu-423.

It belongs to the peptidase M24B family. Bacterial-type prolidase subfamily. Requires Mn(2+) as cofactor.

The catalysed reaction is Xaa-L-Pro dipeptide + H2O = an L-alpha-amino acid + L-proline. Its function is as follows. Splits dipeptides with a prolyl residue in the C-terminal position. The sequence is that of Xaa-Pro dipeptidase from Colwellia psychrerythraea (strain 34H / ATCC BAA-681) (Vibrio psychroerythus).